Consider the following 188-residue polypeptide: MTQGIPAVFLDRDGTINIDHGYVHEIDDFQFIDGVIEAMIELKKMGYALVLVTNQSGIARGIFDEEQFLQLTEWMDWSLADRGVDLDGIYYCPHHPDATEEQYKKSCDCRKPQPGMLLDAQRELSIDMTASFMIGDKLEDMQAATLAKIGTKVLVRTGKPVNTEAEQAANLIINSLADLPKAIKGIKK.

Positions 92, 94, 107, and 109 each coordinate Zn(2+).

This sequence belongs to the GmhB family.

It is found in the cytoplasm. The enzyme catalyses D-glycero-beta-D-manno-heptose 1,7-bisphosphate + H2O = D-glycero-beta-D-manno-heptose 1-phosphate + phosphate. The protein operates within nucleotide-sugar biosynthesis; ADP-L-glycero-beta-D-manno-heptose biosynthesis; ADP-L-glycero-beta-D-manno-heptose from D-glycero-beta-D-manno-heptose 7-phosphate: step 2/4. It participates in bacterial outer membrane biogenesis; LPS core biosynthesis. Its function is as follows. Converts the D-glycero-beta-D-manno-heptose 1,7-bisphosphate intermediate into D-glycero-beta-D-manno-heptose 1-phosphate by removing the phosphate group at the C-7 position. The protein is D-glycero-beta-D-manno-heptose-1,7-bisphosphate 7-phosphatase (gmhB1) of Photorhabdus laumondii subsp. laumondii (strain DSM 15139 / CIP 105565 / TT01) (Photorhabdus luminescens subsp. laumondii).